We begin with the raw amino-acid sequence, 160 residues long: Cytochrome b6-f complex subunit 4 (160 aa).

A run of 4 helical transmembrane segments spans residues 36–56, 68–88, 95–115, and 131–151; these read LLYI…GLAV, PFAT…FQIL, FFGV…PFLE, and SVFL…VLPI.

This sequence belongs to the cytochrome b family. PetD subfamily. In terms of assembly, the 4 large subunits of the cytochrome b6-f complex are cytochrome b6, subunit IV (17 kDa polypeptide, petD), cytochrome f and the Rieske protein, while the 4 small subunits are petG, petL, petM and petN. The complex functions as a dimer.

It localises to the plastid. Its subcellular location is the chloroplast thylakoid membrane. Component of the cytochrome b6-f complex, which mediates electron transfer between photosystem II (PSII) and photosystem I (PSI), cyclic electron flow around PSI, and state transitions. The chain is Cytochrome b6-f complex subunit 4 from Welwitschia mirabilis (Tree tumbo).